A 209-amino-acid chain; its full sequence is Ribonuclease HII (209 aa).

An RNase H type-2 domain is found at 7-198 (GPVAGVDEAG…VAKAHQEWLH (192 aa)). Positions 13, 14, and 107 each coordinate a divalent metal cation.

The protein belongs to the RNase HII family. Requires Mn(2+) as cofactor. Mg(2+) is required as a cofactor.

It localises to the cytoplasm. It catalyses the reaction Endonucleolytic cleavage to 5'-phosphomonoester.. In terms of biological role, endonuclease that specifically degrades the RNA of RNA-DNA hybrids. The polypeptide is Ribonuclease HII (Corynebacterium glutamicum (strain ATCC 13032 / DSM 20300 / JCM 1318 / BCRC 11384 / CCUG 27702 / LMG 3730 / NBRC 12168 / NCIMB 10025 / NRRL B-2784 / 534)).